Consider the following 670-residue polypeptide: Polar flagellar hook-associated protein 2 (670 aa).

Positions 226 to 300 (PLQAPQQPDQ…RSSLRPEERI (75 aa)) are disordered. Over residues 257–266 (AQDDAQDDAS) the composition is skewed to acidic residues. Residues 272–283 (AAGAEAAKAGQE) are compositionally biased toward low complexity. The span at 284–300 (AIDKANQRSSLRPEERI) shows a compositional bias: basic and acidic residues. A coiled-coil region spans residues 342–428 (GTLTDSYVTT…AQSSFEEYLG (87 aa)).

Belongs to the FliD family. Homopentamer.

The protein localises to the secreted. Its subcellular location is the bacterial flagellum. In terms of biological role, required for the morphogenesis and for the elongation of the flagellar filament by facilitating polymerization of the flagellin monomers at the tip of growing filament. Forms a capping structure, which prevents flagellin subunits (transported through the central channel of the flagellum) from leaking out without polymerization at the distal end. Important for swimming motility. This Vibrio parahaemolyticus serotype O3:K6 (strain RIMD 2210633) protein is Polar flagellar hook-associated protein 2 (fliDP).